A 184-amino-acid chain; its full sequence is MSKLDNQNLIWIDLEMTGLDPEKERIIEVATIVTDKDLNILAEGPVLTVHQSNDLLNKMSDWCIKTHTENGLIERVKQSKLTERAVELQTIDFLKQWVPKGASPICGNSVAQDKRFLYKYMPDLADYFHYRHLDVSTLKELARRWKPDMLNAFNKKNTHLALDDIRESIEELKFYRTHFINLEK.

The 164-residue stretch at 9–172 folds into the Exonuclease domain; the sequence is LIWIDLEMTG…DDIRESIEEL (164 aa). Tyr-130 is an active-site residue.

It belongs to the oligoribonuclease family.

The protein resides in the cytoplasm. In terms of biological role, 3'-to-5' exoribonuclease specific for small oligoribonucleotides. The chain is Oligoribonuclease from Actinobacillus pleuropneumoniae serotype 5b (strain L20).